The following is a 612-amino-acid chain: MSQHQPPPVFDSTSFLKNVTKLPGVYQMYDADGAILYVGKAKNLKNRLSSYFRATGLTPKTHALVKRIQAIEVTVTPSEAEALVLEHNLIKSQKPPFNILLRDDKSFPYIFISEGEPYPKLAFHRGPKKKKGQYFGPFPNASAVKETLNFLQRTFRVRQCEDSVFRSRTRPCLQYQIGRCTGPCVEAISVEDYAVDLAHTAMFLDGKSEVLQQELQVEMEQASQALDFERAVVVRDQITDLRQVQAQQVMEAGYSNQDVVACASESGVHCIHILYVRQGRIVGSKSYLPKTKLDSTEEDVLSAFLAHHYLGGAAMDVPPHIIISHKLADQLIIGEAVEKATGKQLKLTHNVRTYRAKWLAMALEAARQNLKNHLNNKQTLVARFESLQDILGLDETPNRIECFDISHSSGELTVGSCVVFDQNGAKKSDYRRFNIEGIKAGDDYAAMEQVLTRRYTRLQKESSSMPDLVLIDGGKGQLSKAKAVVEELGIHDMMLIGVAKGTTRKPGFETLVLTSGAERVLKADSAALHLIQQIRDEAHRFAITGHKQRRDKKRRTSVLEGIPGVGPKRRKELLVHFGGLQEVLRANVDDLAKAPSISKKMAQEIYNVLHSE.

In terms of domain architecture, GIY-YIG spans 21-99; the sequence is KLPGVYQMYD…IKSQKPPFNI (79 aa). Residues 209-244 form the UVR domain; that stretch reads EVLQQELQVEMEQASQALDFERAVVVRDQITDLRQV.

Belongs to the UvrC family. In terms of assembly, interacts with UvrB in an incision complex.

It is found in the cytoplasm. In terms of biological role, the UvrABC repair system catalyzes the recognition and processing of DNA lesions. UvrC both incises the 5' and 3' sides of the lesion. The N-terminal half is responsible for the 3' incision and the C-terminal half is responsible for the 5' incision. The protein is UvrABC system protein C of Saccharophagus degradans (strain 2-40 / ATCC 43961 / DSM 17024).